The sequence spans 350 residues: Inhibin beta E chain (350 aa).

A signal peptide spans 1–21 (MGLSNVQLWTILLWALAWVQS). Positions 22 to 236 (TRSACPSCGA…EPGAGRARRR (215 aa)) are excised as a propeptide. Residue N198 is glycosylated (N-linked (GlcNAc...) asparagine). 4 disulfide bridges follow: C240–C248, C247–C315, C276–C347, and C280–C349.

It belongs to the TGF-beta family. As to quaternary structure, homodimeric or heterodimeric through association with alpha and beta subunits, linked by one or more disulfide bonds. Inhibins are heterodimers of one alpha and one beta subunit. Activins are homo- or heterodimers of beta subunits only.

Its subcellular location is the secreted. Functionally, inhibins and activins inhibit and activate, respectively, the secretion of follitropin by the pituitary gland. Inhibins/activins are involved in regulating a number of diverse functions such as hypothalamic and pituitary hormone secretion, gonadal hormone secretion, germ cell development and maturation, erythroid differentiation, insulin secretion, nerve cell survival, embryonic axial development or bone growth, depending on their subunit composition. Inhibins appear to oppose the functions of activins. Activin E is a homodimer of INHBE secreted by the liver that plays a crucial role in regulating metabolic homeostasis particularly in lipid metabolism and energy homeostasis. Plays a central role in the regulation of adipose tissue lipolysis by preventing the influx of fatty acids from adipose tissue into the liver. Mechanistically, signals via ACVR1C to activate SMAD2/3 signaling, suppressing PPARG target genes in adipose tissue, thereby reducing liver lipid content and improving glycemic control. Induces beige adipocyte formation and thermogenesis in response to cold exposure. This Rattus norvegicus (Rat) protein is Inhibin beta E chain (Inhbe).